Reading from the N-terminus, the 76-residue chain is Sea anemone sodium channel inhibitor type I (76 aa).

Positions 1-19 are cleaved as a signal peptide; that stretch reads MNRMLIIFVVVTVFGLASG. A propeptide spanning residues 20 to 30 is cleaved from the precursor; sequence LGPNMPAPDLA. Intrachain disulfides connect Cys37-Cys72, Cys39-Cys60, and Cys53-Cys73.

Belongs to the sea anemone sodium channel inhibitory toxin family. Type I subfamily. In terms of tissue distribution, expressed in acontia, a specialised envenomation structure laden with batteries of venom-containing nematocysts found only in the superfamily Metridioidea.

The protein localises to the secreted. The protein resides in the nematocyst. May affect sodium channels (Nav). This Calliactis polypus (Hermit crab anemone) protein is Sea anemone sodium channel inhibitor type I.